The sequence spans 311 residues: L-lactate dehydrogenase (311 aa).

NAD(+)-binding positions include Val-12, Asp-33, Lys-38, Tyr-63, and 77 to 78 (GA). Residues Gln-80 and Arg-86 each coordinate substrate. NAD(+) is bound by residues Ser-99, 116–118 (VTN), and Ser-141. 118 to 121 (NPVD) provides a ligand contact to substrate. 146–149 (DSSR) contributes to the substrate binding site. Arg-151 and His-166 together coordinate beta-D-fructose 1,6-bisphosphate. The Proton acceptor role is filled by His-173. Phosphotyrosine is present on Tyr-219. Thr-228 is a binding site for substrate.

This sequence belongs to the LDH/MDH superfamily. LDH family. As to quaternary structure, homotetramer.

It localises to the cytoplasm. The catalysed reaction is (S)-lactate + NAD(+) = pyruvate + NADH + H(+). It participates in fermentation; pyruvate fermentation to lactate; (S)-lactate from pyruvate: step 1/1. Its activity is regulated as follows. Allosterically activated by fructose 1,6-bisphosphate (FBP). In terms of biological role, catalyzes the conversion of lactate to pyruvate. The chain is L-lactate dehydrogenase from Thermoanaerobacterium saccharolyticum (strain DSM 8691 / JW/SL-YS485).